A 103-amino-acid chain; its full sequence is MVKEITDATFEQETSEGLVLTDFWATWCGPCRMVAPVLEEIQEERGEALKIVKMDVDENPETPGSFGVMSIPTLLIKKDGEVVETIIGYRPKEELDEVINKYV.

A Thioredoxin domain is found at 1 to 103 (MVKEITDATF…ELDEVINKYV (103 aa)). Cys-28 and Cys-31 are oxidised to a cystine.

Belongs to the thioredoxin family.

Functionally, component of the thioredoxin-thioredoxin reductase system. Participates in various redox reactions through the reversible oxidation of its active center dithiol to a disulfide and catalyzes dithiol-disulfide exchange reactions. The polypeptide is Thioredoxin (trxA) (Listeria innocua serovar 6a (strain ATCC BAA-680 / CLIP 11262)).